Reading from the N-terminus, the 319-residue chain is Formimidoylglutamase (319 aa).

The Mn(2+) site is built by asparagine 127, aspartate 150, histidine 152, aspartate 154, aspartate 242, and aspartate 244.

The protein belongs to the arginase family. It depends on Mn(2+) as a cofactor.

It catalyses the reaction N-formimidoyl-L-glutamate + H2O = formamide + L-glutamate. Its pathway is amino-acid degradation; L-histidine degradation into L-glutamate; L-glutamate from N-formimidoyl-L-glutamate (hydrolase route): step 1/1. Catalyzes the conversion of N-formimidoyl-L-glutamate to L-glutamate and formamide. This Bacillus subtilis (strain 168) protein is Formimidoylglutamase.